A 208-amino-acid chain; its full sequence is High frequency lysogenization protein HflD homolog (208 aa).

This sequence belongs to the HflD family.

It localises to the cytoplasm. It is found in the cell inner membrane. The polypeptide is High frequency lysogenization protein HflD homolog (Edwardsiella ictaluri (strain 93-146)).